Reading from the N-terminus, the 755-residue chain is Dolichyl-phosphate-mannose--protein mannosyltransferase 4 (755 aa).

Positions 1 to 23 are disordered; the sequence is MSQTLKKRGGNSSGRKSPTTSNI. An N-linked (GlcNAc...) asparagine glycan is attached at asparagine 11. Positions 13-23 are enriched in polar residues; the sequence is SGRKSPTTSNI. The next 6 helical transmembrane spans lie at 92 to 112, 147 to 167, 185 to 205, 212 to 232, 237 to 257, and 278 to 298; these read FFDL…WLIG, IVPI…ACLF, ILLD…YSKF, SFSS…SCVI, VGVF…WILL, and ALII…FAIL. MIR domains are found at residues 325-389, 396-454, and 466-523; these read SKPV…IVPT, GTKV…LRLH, and KKEI…FDLI. Residue asparagine 445 is glycosylated (N-linked (GlcNAc...) asparagine). The next 3 membrane-spanning stretches (helical) occupy residues 595–615, 640–660, and 670–690; these read IFFI…SIYI, LYNT…PFFL, and YLPA…FICS. N-linked (GlcNAc...) asparagine glycosylation occurs at asparagine 691. The helical transmembrane segment at 706-726 threads the bilayer; it reads YKIIAVVAACSTAIIWFFFYF.

Belongs to the glycosyltransferase 39 family. As to quaternary structure, forms a functional homodimer.

It localises to the endoplasmic reticulum membrane. The enzyme catalyses a di-trans,poly-cis-dolichyl beta-D-mannosyl phosphate + L-seryl-[protein] = 3-O-(alpha-D-mannosyl)-L-seryl-[protein] + a di-trans,poly-cis-dolichyl phosphate + H(+). It carries out the reaction a di-trans,poly-cis-dolichyl beta-D-mannosyl phosphate + L-threonyl-[protein] = 3-O-(alpha-D-mannosyl)-L-threonyl-[protein] + a di-trans,poly-cis-dolichyl phosphate + H(+). It participates in protein modification; protein glycosylation. Its function is as follows. Protein mannosyltransferase (PMT) involved in hyphal growth and drug sensitivity. Transfers mannose from Dol-P-mannose to Ser or Thr residues on proteins. PMT1, PMT2 and PMT4 account for most of the protein-O-glycosylation activity, while PMT5 and PMT6 may specifically modulate a much narrower spectrum of target proteins. Accounts for the O-glycosylation of AXL2, responsible for bud site selection, as well as of the SEC20 t-SNARE component. O-glycosylation of SEC20 is essential for its stability. Required for biofilm formation. The chain is Dolichyl-phosphate-mannose--protein mannosyltransferase 4 from Candida albicans (strain SC5314 / ATCC MYA-2876) (Yeast).